Reading from the N-terminus, the 126-residue chain is Small ribosomal subunit protein uS12 (126 aa).

A 3-methylthioaspartic acid modification is found at Asp-89.

The protein belongs to the universal ribosomal protein uS12 family. In terms of assembly, part of the 30S ribosomal subunit. Contacts proteins S8 and S17. May interact with IF1 in the 30S initiation complex.

Its function is as follows. With S4 and S5 plays an important role in translational accuracy. Interacts with and stabilizes bases of the 16S rRNA that are involved in tRNA selection in the A site and with the mRNA backbone. Located at the interface of the 30S and 50S subunits, it traverses the body of the 30S subunit contacting proteins on the other side and probably holding the rRNA structure together. The combined cluster of proteins S8, S12 and S17 appears to hold together the shoulder and platform of the 30S subunit. This chain is Small ribosomal subunit protein uS12, found in Carboxydothermus hydrogenoformans (strain ATCC BAA-161 / DSM 6008 / Z-2901).